Reading from the N-terminus, the 168-residue chain is MKSLNRQTVSRFKKLSVPAAIMMILSTIISGIGTFLHYKEELMPSACANGWIQYDKHCYLDTNIKMSTDNTVYQCRKLRARLPRPDTRHLRVLFSIFYKDYWVSLKKTNNKWLDINNDKDIDISKLTNFKQLNSTTDAEACYIYKSGKLVKTVCKSTQSVLCVKRFYK.

Topologically, residues 1-14 (MKSLNRQTVSRFKK) are intravirion. The chain crosses the membrane as a helical span at residues 15–37 (LSVPAAIMMILSTIISGIGTFLH). At 38–168 (YKEELMPSAC…SVLCVKRFYK (131 aa)) the chain is on the virion surface side. Residues 54–163 (YDKHCYLDTN…CKSTQSVLCV (110 aa)) enclose the C-type lectin domain. Intrachain disulfides connect Cys75/Cys162 and Cys141/Cys154. Residue Asn133 is glycosylated (N-linked (GlcNAc...) asparagine; by host).

It belongs to the orthopoxvirus OPG162 protein family. As to quaternary structure, interacts with protein OPG161. Interacts with protein OPG164. Interacts with protein OPG190.

The protein localises to the virion membrane. The protein resides in the host Golgi apparatus. Functionally, forms a complex with OPG162 and OPG190 to coordinate the incorporation of OPG164 into wrapped enveloped virion (EV) membranes and, subsequently, the production of actin tails. Therefore plays an essential role in efficient cell-to-cell spread of viral particles. The chain is Protein OPG162 (OPG162) from Variola virus (isolate Human/India/Ind3/1967) (VARV).